Here is a 311-residue protein sequence, read N- to C-terminus: Protein lifeguard 3 (311 aa).

Disordered stretches follow at residues 1–37 (MSNP…GGYP) and 50–72 (PAGY…PGHG). Positions 53–62 (YPQPMPPTHP) are enriched in pro residues. Residues serine 81 and serine 83 each carry the phosphoserine modification. The next 7 helical transmembrane spans lie at 110–130 (LLIT…SAFV), 134–154 (VAVY…LACC), 165–185 (IILL…ISSM), 190–210 (AVII…IFCF), 221–241 (GLFC…SIVL), 246–266 (VYWL…LFLA), and 286–306 (ITGA…VLQL).

It belongs to the BI1 family. LFG subfamily.

It localises to the membrane. The protein localises to the lysosome membrane. The protein resides in the endosome membrane. Functionally, negatively regulates aortic matrix metalloproteinase-9 (MMP9) production and may play a protective role in vascular remodeling. This chain is Protein lifeguard 3 (TMBIM1), found in Homo sapiens (Human).